The following is a 585-amino-acid chain: Phosphomethylpyrimidine synthase (585 aa).

The span at 89 to 107 (RGDTESYEGRHVKPEDNGY) shows a compositional bias: basic and acidic residues. The disordered stretch occupies residues 89–116 (RGDTESYEGRHVKPEDNGYRSRNGSHQH). Substrate is bound by residues Asn-199, Met-228, Tyr-257, His-293, 313–315 (SRG), 354–357 (DGLR), and Glu-393. Position 397 (His-397) interacts with Zn(2+). Tyr-420 contacts substrate. His-461 lines the Zn(2+) pocket. [4Fe-4S] cluster is bound by residues Cys-541, Cys-544, and Cys-549.

This sequence belongs to the ThiC family. [4Fe-4S] cluster serves as cofactor.

The enzyme catalyses 5-amino-1-(5-phospho-beta-D-ribosyl)imidazole + S-adenosyl-L-methionine = 4-amino-2-methyl-5-(phosphooxymethyl)pyrimidine + CO + 5'-deoxyadenosine + formate + L-methionine + 3 H(+). The protein operates within cofactor biosynthesis; thiamine diphosphate biosynthesis. Its function is as follows. Catalyzes the synthesis of the hydroxymethylpyrimidine phosphate (HMP-P) moiety of thiamine from aminoimidazole ribotide (AIR) in a radical S-adenosyl-L-methionine (SAM)-dependent reaction. The protein is Phosphomethylpyrimidine synthase of Bacillus pumilus (strain SAFR-032).